Consider the following 689-residue polypeptide: Glycine--tRNA ligase beta subunit (689 aa).

Belongs to the class-II aminoacyl-tRNA synthetase family. As to quaternary structure, tetramer of two alpha and two beta subunits.

The protein resides in the cytoplasm. The catalysed reaction is tRNA(Gly) + glycine + ATP = glycyl-tRNA(Gly) + AMP + diphosphate. This chain is Glycine--tRNA ligase beta subunit, found in Shewanella piezotolerans (strain WP3 / JCM 13877).